The sequence spans 179 residues: Ribosome maturation factor RimM (179 aa).

The 76-residue stretch at 99–174 (EEDEYYFDQI…IMIVDLPEGL (76 aa)) folds into the PRC barrel domain.

It belongs to the RimM family. In terms of assembly, binds ribosomal protein uS19.

Its subcellular location is the cytoplasm. Its function is as follows. An accessory protein needed during the final step in the assembly of 30S ribosomal subunit, possibly for assembly of the head region. Essential for efficient processing of 16S rRNA. May be needed both before and after RbfA during the maturation of 16S rRNA. It has affinity for free ribosomal 30S subunits but not for 70S ribosomes. The chain is Ribosome maturation factor RimM from Natranaerobius thermophilus (strain ATCC BAA-1301 / DSM 18059 / JW/NM-WN-LF).